The following is a 358-amino-acid chain: MKAATACIDLVALQHNLQLIKQQAPHSKLMAVVKANGYGHGLRHVAKHAVGADAFGVARIEEALQLRACGVVKPILLLEGFYSSGDLPVLVTNNIQTVVHCEEQLRDLENAELETPVVVWLKIDSGMHRLGVRPEQYQAFVERLHQCPNVAKPLRYMSHFGCADEMNNEMTPKQIELFLSLTRGCKGERSLAASAGLLAWQESQLEWVRPGIIMYGVSPFGDKTASELGYKPVMTLKSHLIAVRDVKAGESVGYGATWISERDTKVGVIAIGYGDGYPRTAPNGTPVLVNGRKVPIAGRVSMDMLTVDLGPDATDHVGDEAILWGADLPAEDVAQHIGTIAYELVTKLTSRVEMSYSE.

K34 acts as the Proton acceptor; specific for D-alanine in catalysis. K34 is subject to N6-(pyridoxal phosphate)lysine. R129 provides a ligand contact to substrate. Y254 functions as the Proton acceptor; specific for L-alanine in the catalytic mechanism. M302 is a substrate binding site.

It belongs to the alanine racemase family. Pyridoxal 5'-phosphate serves as cofactor.

The enzyme catalyses L-alanine = D-alanine. It participates in amino-acid biosynthesis; D-alanine biosynthesis; D-alanine from L-alanine: step 1/1. Catalyzes the interconversion of L-alanine and D-alanine. May also act on other amino acids. The chain is Alanine racemase (alr) from Vibrio vulnificus (strain CMCP6).